The chain runs to 590 residues: Arginine--tRNA ligase (590 aa).

A 'HIGH' region motif is present at residues 130–140; that stretch reads ANPTGPMHVGH.

It belongs to the class-I aminoacyl-tRNA synthetase family. As to quaternary structure, monomer.

It localises to the cytoplasm. The catalysed reaction is tRNA(Arg) + L-arginine + ATP = L-arginyl-tRNA(Arg) + AMP + diphosphate. This chain is Arginine--tRNA ligase, found in Methylobacterium nodulans (strain LMG 21967 / CNCM I-2342 / ORS 2060).